The following is a 912-amino-acid chain: Translation initiation factor IF-2 (912 aa).

Positions 26-297 (SDQGEFVKSA…RGRKSKRAKR (272 aa)) are disordered. Residues 56 to 74 (KPAPAASNGAAAEAAAPPK) show a composition bias toward low complexity. Positions 100 to 120 (APEPPAAPAAPAAPAPKPSPA) are enriched in pro residues. The segment covering 121-131 (ARPAAAEAAAP) has biased composition (low complexity). Pro residues-rich tracts occupy residues 132-152 (APAP…PGAP), 173-183 (PRPQAPRPGAP), and 192-218 (NMPP…PGGG). Gly residues predominate over residues 219–283 (PRPGGAGRPG…GAAGAFGRPG (65 aa)). Basic residues predominate over residues 287-296 (KRGRKSKRAK). The tr-type G domain maps to 408–579 (TRPPVVTVMG…AVLLTADAAL (172 aa)). The interval 417–424 (GHVDHGKT) is G1. 417–424 (GHVDHGKT) serves as a coordination point for GTP. Residues 442-446 (GITQH) form a G2 region. The tract at residues 467–470 (DTPG) is G3. GTP-binding positions include 467 to 471 (DTPGH) and 521 to 524 (NKID). Positions 521–524 (NKID) are G4. Positions 557 to 559 (SAR) are G5.

Belongs to the TRAFAC class translation factor GTPase superfamily. Classic translation factor GTPase family. IF-2 subfamily.

It is found in the cytoplasm. One of the essential components for the initiation of protein synthesis. Protects formylmethionyl-tRNA from spontaneous hydrolysis and promotes its binding to the 30S ribosomal subunits. Also involved in the hydrolysis of GTP during the formation of the 70S ribosomal complex. This Mycobacteroides abscessus (strain ATCC 19977 / DSM 44196 / CCUG 20993 / CIP 104536 / JCM 13569 / NCTC 13031 / TMC 1543 / L948) (Mycobacterium abscessus) protein is Translation initiation factor IF-2.